We begin with the raw amino-acid sequence, 281 residues long: Ribosomal RNA small subunit methyltransferase A (281 aa).

Residues Asn24, Leu26, Gly51, Glu72, Asp96, and Asn123 each contribute to the S-adenosyl-L-methionine site.

This sequence belongs to the class I-like SAM-binding methyltransferase superfamily. rRNA adenine N(6)-methyltransferase family. RsmA subfamily.

Its subcellular location is the cytoplasm. It catalyses the reaction adenosine(1518)/adenosine(1519) in 16S rRNA + 4 S-adenosyl-L-methionine = N(6)-dimethyladenosine(1518)/N(6)-dimethyladenosine(1519) in 16S rRNA + 4 S-adenosyl-L-homocysteine + 4 H(+). Its function is as follows. Specifically dimethylates two adjacent adenosines (A1518 and A1519) in the loop of a conserved hairpin near the 3'-end of 16S rRNA in the 30S particle. May play a critical role in biogenesis of 30S subunits. This chain is Ribosomal RNA small subunit methyltransferase A, found in Ureaplasma urealyticum serovar 10 (strain ATCC 33699 / Western).